Reading from the N-terminus, the 297-residue chain is Mitochondrial thiamine pyrophosphate carrier 1 (297 aa).

Solcar repeat units follow at residues 13-94 (SHVF…TNAA), 102-195 (PPTI…IRAR), and 196-295 (WPET…LMRV). Helical transmembrane passes span 19–36 (LVSG…IAPL), 75–91 (IMYI…YSYT), 109–128 (LAGA…FDVL), 163–187 (GLGG…AMFG), 203–219 (TAGA…TFPL), and 270–287 (GIGL…INLW).

This sequence belongs to the mitochondrial carrier (TC 2.A.29) family.

The protein localises to the mitochondrion inner membrane. Its function is as follows. Mitochondrial transporter that mediates uptake of thiamine pyrophosphate (ThPP) into mitochondria. This Vanderwaltozyma polyspora (strain ATCC 22028 / DSM 70294 / BCRC 21397 / CBS 2163 / NBRC 10782 / NRRL Y-8283 / UCD 57-17) (Kluyveromyces polysporus) protein is Mitochondrial thiamine pyrophosphate carrier 1 (TPC1).